A 310-amino-acid chain; its full sequence is S-adenosylmethionine-dependent nucleotide dehydratase (310 aa).

The 219-residue stretch at 3 to 221 (PAIPPTINLH…VERHRKVESS (219 aa)) folds into the Radical SAM core domain. Positions 17, 21, and 24 each coordinate [4Fe-4S] cluster.

The protein belongs to the radical SAM superfamily. Viperin family. The cofactor is [4Fe-4S] cluster.

The catalysed reaction is GTP + AH2 + S-adenosyl-L-methionine = 3'-deoxy-3',4'-didehydro-GTP + 5'-deoxyadenosine + L-methionine + A + H2O + H(+). In terms of biological role, expression of pVip15 in E.coli (strain MG1655) confers resistance to phage T7; prevents culture collapse upon infection. Catalyzes the conversion of guanosine triphosphate (GTP) to 3'-deoxy-3',4'-didehydro-GTP (ddhGTP), probably via a SAM-dependent radical mechanism. The modified nucleotide represses transcription from T7 RNA polymerase-directed genes (possibly by acting as chain terminators), strongly suggesting these nucleotides block viral polymerase transcription. This chain is S-adenosylmethionine-dependent nucleotide dehydratase, found in Coraliomargarita akajimensis (strain DSM 45221 / IAM 15411 / JCM 23193 / KCTC 12865 / 04OKA010-24).